Here is a 145-residue protein sequence, read N- to C-terminus: Aminoglycoside N(6')-acetyltransferase type 1 (145 aa).

One can recognise an N-acetyltransferase domain in the interval 1-145; sequence MDIRQMNRTH…ERVIFYRKRC (145 aa). Substrate is bound by residues Trp-22, His-25, Tyr-66, and Glu-79. Residues 81–83 and 89–94 each bind acetyl-CoA; these read IFV and QRGVAK. Asp-115 contacts substrate. Residue Asn-120 participates in acetyl-CoA binding. Glu-136 contributes to the substrate binding site.

Homodimer.

It carries out the reaction kanamycin B + acetyl-CoA = N(6')-acetylkanamycin B + CoA + H(+). Functionally, catalyzes the transfer of an acetyl group from acetyl-CoA to the 6'-amino group of aminoglycoside molecules conferring resistance to antibiotics containing the purpurosamine ring. The sequence is that of Aminoglycoside N(6')-acetyltransferase type 1 from Salmonella typhimurium (strain LT2 / SGSC1412 / ATCC 700720).